Consider the following 78-residue polypeptide: UPF0349 protein YuzB (78 aa).

It belongs to the UPF0349 family.

The sequence is that of UPF0349 protein YuzB (yuzB) from Bacillus subtilis (strain 168).